A 176-amino-acid chain; its full sequence is MSLNNVPAGKSLPDDLYVVIEIPANADPIKYEVDKESGAVFVDRFMSAPMFYPCNYGYVNHTLSLDGDPVDVLVPTPYPLMPGSVIRCRPVGVLKMTDESGEDAKVVAVPHSKLSKEYDHIQDVNDLPELLKAQITHFFERYKELESGKWVKVDGWEDVEAARKEILDSYQRAQNK.

Residues Lys30, Arg44, and Tyr56 each coordinate substrate. Residues Asp66, Asp71, and Asp103 each coordinate Mg(2+). Residue Tyr142 coordinates substrate.

Belongs to the PPase family. As to quaternary structure, homohexamer. Mg(2+) is required as a cofactor.

Its subcellular location is the cytoplasm. It carries out the reaction diphosphate + H2O = 2 phosphate + H(+). Catalyzes the hydrolysis of inorganic pyrophosphate (PPi) forming two phosphate ions. This Vibrio vulnificus (strain CMCP6) protein is Inorganic pyrophosphatase.